A 559-amino-acid polypeptide reads, in one-letter code: Glucose-6-phosphate isomerase (559 aa).

The active-site Proton donor is Glu-363. Active-site residues include His-394 and Lys-523.

This sequence belongs to the GPI family.

The protein resides in the cytoplasm. The enzyme catalyses alpha-D-glucose 6-phosphate = beta-D-fructose 6-phosphate. It participates in carbohydrate biosynthesis; gluconeogenesis. Its pathway is carbohydrate degradation; glycolysis; D-glyceraldehyde 3-phosphate and glycerone phosphate from D-glucose: step 2/4. Its function is as follows. Catalyzes the reversible isomerization of glucose-6-phosphate to fructose-6-phosphate. The sequence is that of Glucose-6-phosphate isomerase from Bartonella henselae (strain ATCC 49882 / DSM 28221 / CCUG 30454 / Houston 1) (Rochalimaea henselae).